The chain runs to 497 residues: tRNA-2-methylthio-N(6)-dimethylallyladenosine synthase (497 aa).

Residues 1–48 (MTGTSNIPTHGKEHKDAPALLPLPAPNTHHTHAAHPGDPSHDRHPSRG) are disordered. Over residues 18–28 (PALLPLPAPNT) the composition is skewed to low complexity. Residues 48-165 (GKLFIKTHGC…LPDMIRARRE (118 aa)) enclose the MTTase N-terminal domain. [4Fe-4S] cluster-binding residues include C57, C94, C128, C202, C206, and C209. One can recognise a Radical SAM core domain in the interval 188–430 (RAEGPSAFVS…QKHINAYAAD (243 aa)). Residues 433–496 (KRMIGTVQTV…TNSLRGRVHT (64 aa)) enclose the TRAM domain.

It belongs to the methylthiotransferase family. MiaB subfamily. As to quaternary structure, monomer. Requires [4Fe-4S] cluster as cofactor.

Its subcellular location is the cytoplasm. It catalyses the reaction N(6)-dimethylallyladenosine(37) in tRNA + (sulfur carrier)-SH + AH2 + 2 S-adenosyl-L-methionine = 2-methylsulfanyl-N(6)-dimethylallyladenosine(37) in tRNA + (sulfur carrier)-H + 5'-deoxyadenosine + L-methionine + A + S-adenosyl-L-homocysteine + 2 H(+). Its function is as follows. Catalyzes the methylthiolation of N6-(dimethylallyl)adenosine (i(6)A), leading to the formation of 2-methylthio-N6-(dimethylallyl)adenosine (ms(2)i(6)A) at position 37 in tRNAs that read codons beginning with uridine. This Xylella fastidiosa (strain M23) protein is tRNA-2-methylthio-N(6)-dimethylallyladenosine synthase.